A 341-amino-acid chain; its full sequence is Dihydroorotate dehydrogenase (quinone) (341 aa).

Residues 61–65 and threonine 85 contribute to the FMN site; that span reads AGLDK. A substrate-binding site is contributed by lysine 65. Residue 110–114 coordinates substrate; the sequence is NRMGF. FMN-binding residues include asparagine 138 and asparagine 171. Substrate is bound at residue asparagine 171. Catalysis depends on serine 174, which acts as the Nucleophile. Residue asparagine 176 participates in substrate binding. FMN contacts are provided by lysine 216 and threonine 244. 245–246 is a substrate binding site; sequence NT. FMN is bound by residues glycine 267, glycine 296, and 317-318; that span reads YS.

This sequence belongs to the dihydroorotate dehydrogenase family. Type 2 subfamily. In terms of assembly, monomer. FMN is required as a cofactor.

It is found in the cell membrane. It catalyses the reaction (S)-dihydroorotate + a quinone = orotate + a quinol. Its pathway is pyrimidine metabolism; UMP biosynthesis via de novo pathway; orotate from (S)-dihydroorotate (quinone route): step 1/1. In terms of biological role, catalyzes the conversion of dihydroorotate to orotate with quinone as electron acceptor. This chain is Dihydroorotate dehydrogenase (quinone), found in Pseudomonas putida (strain W619).